We begin with the raw amino-acid sequence, 732 residues long: Elongation factor 2 (732 aa).

The tr-type G domain occupies Glu-19–Ile-260. Residues Ala-28–Thr-35, Asp-94–His-98, and Asn-148–Asp-151 contribute to the GTP site. His-597 carries the post-translational modification Diphthamide.

This sequence belongs to the TRAFAC class translation factor GTPase superfamily. Classic translation factor GTPase family. EF-G/EF-2 subfamily.

It localises to the cytoplasm. Functionally, catalyzes the GTP-dependent ribosomal translocation step during translation elongation. During this step, the ribosome changes from the pre-translocational (PRE) to the post-translocational (POST) state as the newly formed A-site-bound peptidyl-tRNA and P-site-bound deacylated tRNA move to the P and E sites, respectively. Catalyzes the coordinated movement of the two tRNA molecules, the mRNA and conformational changes in the ribosome. In Pyrococcus abyssi (strain GE5 / Orsay), this protein is Elongation factor 2 (fusA).